Consider the following 1559-residue polypeptide: Arginine-glutamic acid dipeptide repeats protein (1559 aa).

Positions 1–36 (MTADKDKDKDKEKDRDRDRDRERDKRDKARESENAR) are enriched in basic and acidic residues. The tract at residues 1–89 (MTADKDKDKD…KKKSRYERTD (89 aa)) is disordered. 2 positions are modified to phosphoserine: Ser53 and Ser56. Over residues 73 to 84 (KSRKKPPKKKSR) the composition is skewed to basic residues. The region spanning 102 to 282 (VVYRPGDCVY…PETRRLNSTQ (181 aa)) is the BAH domain. Thr119 carries the post-translational modification Phosphothreonine. Phosphoserine is present on residues Ser141 and Ser303. One can recognise an ELM2 domain in the interval 283 to 386 (GEIRVGPSHQ…KALQRLVKKP (104 aa)). Positions 390 to 442 (LIEKCWTEDEVKRFVKGLRQYGKNFFRIRKELLPNKETGELITFYYYWKKTPE) constitute an SANT domain. A disordered region spans residues 463-494 (TRTASTPVNTPSRPPSSEFLDLSSASEDDFDS). Over residues 464–473 (RTASTPVNTP) the composition is skewed to polar residues. Low complexity predominate over residues 478–487 (SSEFLDLSSA). The GATA-type zinc-finger motif lies at 507–532 (RHCFTTTSKDWHHGGRENILLCTDCR). The disordered stretch occupies residues 541–1125 (LPPIEKPVDP…PSHASQSARF (585 aa)). A Glycyl lysine isopeptide (Lys-Gly) (interchain with G-Cter in SUMO2) cross-link involves residue Lys559. Phosphoserine is present on residues Ser593, Ser599, and Ser612. Low complexity predominate over residues 608–622 (SGRNSPSAASTSSND). Residues 623–639 (SKAEAVKKSAKKVKEEA) are compositionally biased toward basic and acidic residues. Lys636 is covalently cross-linked (Glycyl lysine isopeptide (Lys-Gly) (interchain with G-Cter in SUMO2)). A phosphoserine mark is found at Ser641, Ser655, Ser674, and Ser678. Residues 651-672 (EKVASDTEDTDRATSKKTKTQE) are compositionally biased toward basic and acidic residues. Basic and acidic residues predominate over residues 687–707 (SDSRSVNDEGSSDPKDIDQDN). Residues 708–735 (RSTSPSIPSPQDNESDSDSSAQQQMLQT) show a composition bias toward polar residues. A compositionally biased stretch (low complexity) spans 736 to 761 (QPPALQAPSGAASAPSTAPPGTTQLP). The span at 768–791 (SATTVPPQGSPATSQPPNQTQSTV) shows a compositional bias: polar residues. Residues 805–822 (LHPPRLPSPHPPLQPMTA) are compositionally biased toward pro residues. Over residues 890 to 900 (QLPASQSALQP) the composition is skewed to low complexity. Residues 901-931 (QQPPREQPLPPAPLAMPHIKPPPTTPIPQLP) are compositionally biased toward pro residues. Residues 961–971 (KPLSSLSTHHP) are compositionally biased toward low complexity. Over residues 1027-1053 (PQHPFVPGGPPPITPPSCPPTSTPPAG) the composition is skewed to pro residues. Over residues 1054 to 1068 (PSSSSQPPCSAAVSS) the composition is skewed to low complexity. 3 positions are modified to phosphoserine: Ser1098, Ser1105, and Ser1107. Over residues 1098 to 1109 (SPPPPPRSPSPE) the composition is skewed to pro residues. Thr1111 carries the phosphothreonine modification. A coiled-coil region spans residues 1148-1205 (GSKLAKKREEAIEKAKREAEQKAREEREREKEKEKEREREREREREAERAAQKASSSA). Lys1150 is subject to N6-acetyllysine. Residues 1154–1198 (KREEAIEKAKREAEQKAREEREREKEKEKEREREREREREAERAA) are compositionally biased toward basic and acidic residues. Positions 1154–1239 (KREEAIEKAK…TTIAAVPPYI (86 aa)) are disordered. Residue Tyr1252 is modified to Phosphotyrosine. Ser1259 is subject to Phosphoserine.

Interacts with HDAC1 and ATN1. Interaction with ATN1 is improved when the poly-Gln region of ATN1 is extended. As to expression, widely expressed.

The protein resides in the nucleus. It localises to the PML body. Functionally, plays a role as a transcriptional repressor during development. May play a role in the control of cell survival. Interacts with FAT1. The protein is Arginine-glutamic acid dipeptide repeats protein (Rere) of Rattus norvegicus (Rat).